We begin with the raw amino-acid sequence, 120 residues long: MLIRYKKAFEKIAMGLLSFMPNEKDLKKLQQTMKQYETEEDRQLFLWKEEEDIIGLIGVLVVNEYEVEIHHISVNPSHRHQGIGKSMVKALRDIYPDKELIPNENTAAFIEKCEICHGSE.

The 118-residue stretch at 3-120 (IRYKKAFEKI…EKCEICHGSE (118 aa)) folds into the N-acetyltransferase domain.

This is an uncharacterized protein from Bacillus methanolicus.